The chain runs to 243 residues: Ubiquinone biosynthesis O-methyltransferase (243 aa).

Residues Arg-44, Gly-64, Asp-85, and Met-129 each contribute to the S-adenosyl-L-methionine site.

Belongs to the methyltransferase superfamily. UbiG/COQ3 family.

It catalyses the reaction a 3-demethylubiquinol + S-adenosyl-L-methionine = a ubiquinol + S-adenosyl-L-homocysteine + H(+). It carries out the reaction a 3-(all-trans-polyprenyl)benzene-1,2-diol + S-adenosyl-L-methionine = a 2-methoxy-6-(all-trans-polyprenyl)phenol + S-adenosyl-L-homocysteine + H(+). It functions in the pathway cofactor biosynthesis; ubiquinone biosynthesis. In terms of biological role, O-methyltransferase that catalyzes the 2 O-methylation steps in the ubiquinone biosynthetic pathway. The sequence is that of Ubiquinone biosynthesis O-methyltransferase from Cronobacter sakazakii (strain ATCC BAA-894) (Enterobacter sakazakii).